The primary structure comprises 245 residues: Putative [LysW]-aminoadipate/[LysW]-glutamate kinase (245 aa).

The substrate site is built by Arg-60 and Asn-162.

It belongs to the acetylglutamate kinase family. LysZ subfamily.

The protein resides in the cytoplasm. The catalysed reaction is [amino-group carrier protein]-C-terminal-N-(1,4-dicarboxybutan-1-yl)-L-glutamine + ATP = [amino-group carrier protein]-C-terminal-N-(1-carboxy-5-phosphooxy-5-oxopentan-1-yl)-L-glutamine + ADP. The enzyme catalyses [amino-group carrier protein]-C-terminal-gamma-(L-glutamyl)-L-glutamate + ATP = [amino-group carrier protein]-C-terminal-gamma-(5-phospho-L-glutamyl)-L-glutamate + ADP. Its pathway is amino-acid biosynthesis; L-lysine biosynthesis via AAA pathway; L-lysine from L-alpha-aminoadipate (Thermus route): step 2/5. It functions in the pathway amino-acid biosynthesis; L-arginine biosynthesis. Its function is as follows. Involved in both the arginine and lysine biosynthetic pathways. Phosphorylates the LysW-bound precursors glutamate (for arginine biosynthesis), respectively alpha-aminoadipate (for lysine biosynthesis). The sequence is that of Putative [LysW]-aminoadipate/[LysW]-glutamate kinase from Pyrococcus abyssi (strain GE5 / Orsay).